A 344-amino-acid polypeptide reads, in one-letter code: Dihydroorotase (344 aa).

2 residues coordinate Zn(2+): His13 and His15. Residues 15–17 (HLR) and Asn41 contribute to the substrate site. Positions 98, 135, and 173 each coordinate Zn(2+). An N6-carboxylysine modification is found at Lys98. His135 contributes to the substrate binding site. Residue Leu218 participates in substrate binding. Asp247 serves as a coordination point for Zn(2+). The active site involves Asp247. The substrate site is built by His251 and Ala263.

It belongs to the metallo-dependent hydrolases superfamily. DHOase family. Class II DHOase subfamily. Homodimer. Requires Zn(2+) as cofactor.

The catalysed reaction is (S)-dihydroorotate + H2O = N-carbamoyl-L-aspartate + H(+). Its pathway is pyrimidine metabolism; UMP biosynthesis via de novo pathway; (S)-dihydroorotate from bicarbonate: step 3/3. In terms of biological role, catalyzes the reversible cyclization of carbamoyl aspartate to dihydroorotate. This is Dihydroorotase from Neisseria meningitidis serogroup C / serotype 2a (strain ATCC 700532 / DSM 15464 / FAM18).